A 44-amino-acid chain; its full sequence is Photosystem I reaction center subunit IX (44 aa).

The helical transmembrane segment at 7 to 27 (YLSVAPVLSTLWFGALAGLLI) threads the bilayer.

This sequence belongs to the PsaJ family.

It localises to the plastid. The protein resides in the chloroplast thylakoid membrane. In terms of biological role, may help in the organization of the PsaE and PsaF subunits. The sequence is that of Photosystem I reaction center subunit IX from Oryza nivara (Indian wild rice).